Consider the following 381-residue polypeptide: Protein-glutamate methylesterase/protein-glutamine glutaminase (381 aa).

One can recognise a Response regulatory domain in the interval 20–138; sequence RVMVVDDSVV…EIAAADIFKH (119 aa). 4-aspartylphosphate is present on Asp-71. Residues 154 to 176 are disordered; the sequence is PAALASAREPEPRPIQATPVPAH. The region spanning 183–373 is the CheB-type methylesterase domain; sequence PFSTHAPRAL…PLQQIAPKLV (191 aa). Catalysis depends on residues Ser-197, His-225, and Asp-321.

It belongs to the CheB family. In terms of processing, phosphorylated by CheA. Phosphorylation of the N-terminal regulatory domain activates the methylesterase activity.

It is found in the cytoplasm. It carries out the reaction [protein]-L-glutamate 5-O-methyl ester + H2O = L-glutamyl-[protein] + methanol + H(+). It catalyses the reaction L-glutaminyl-[protein] + H2O = L-glutamyl-[protein] + NH4(+). Involved in chemotaxis. Part of a chemotaxis signal transduction system that modulates chemotaxis in response to various stimuli. Catalyzes the demethylation of specific methylglutamate residues introduced into the chemoreceptors (methyl-accepting chemotaxis proteins or MCP) by CheR. Also mediates the irreversible deamidation of specific glutamine residues to glutamic acid. The sequence is that of Protein-glutamate methylesterase/protein-glutamine glutaminase from Nitrobacter hamburgensis (strain DSM 10229 / NCIMB 13809 / X14).